The sequence spans 793 residues: PC3-like endoprotease variant A (793 aa).

The signal sequence occupies residues 1–29; that stretch reads MNYRGIYRRRYVFVLLLLVAVVNISYGWT. The propeptide occupies 30–152; it reads VLKNKDYKRR…QQKILERVKR (123 aa). N-linked (GlcNAc...) asparagine glycans are attached at residues Asn62 and Asn190. In terms of domain architecture, Peptidase S8 spans 164 to 486; sequence MWYLLNTGQA…FGRLDANAMV (323 aa). Catalysis depends on charge relay system residues Asp202 and His242. 2 disulfides stabilise this stretch: Cys259–Cys411 and Cys351–Cys381. Ser419 serves as the catalytic Charge relay system. In terms of domain architecture, P/Homo B spans 495-638; it reads LPAQRKCTAA…EERVIDTQTK (144 aa). A disulfide bridge links Cys501 with Cys527.

Belongs to the peptidase S8 family. Furin subfamily. Predominantly in the body column.

Functionally, probably involved in the processing of hormone and other protein precursors at sites comprised of pairs of basic amino acid residues. The sequence is that of PC3-like endoprotease variant A from Hydra vulgaris (Hydra).